A 486-amino-acid chain; its full sequence is PTS system N-acetylmuramic acid-specific EIIBC component (486 aa).

The PTS EIIB type-1 domain occupies 1–89; that stretch reads MAKITQTMIS…NKLIESVING (89 aa). The Phosphocysteine intermediate; for EIIB activity role is filled by Cys-28. A PTS EIIC type-1 domain is found at 127–486; that stretch reads SKFATIFTPL…FFGSKDVDLS (360 aa). The next 10 membrane-spanning stretches (helical) occupy residues 129–149, 170–190, 196–216, 230–250, 268–288, 312–332, 347–367, 381–401, 411–431, and 453–473; these read FATIFTPLIPGFIAAGLLLGF, LIAYMKVFGKGLFAFLSILIG, AFGGSGVNGAILASLFVLGYN, FFGYTIDPRGNIIGVLLAAII, MILTSVVTLLIMGVVTFVVIM, AAILAGLFLISVVFGIHQGFV, LFPILAMAGGGQVGASLALYF, GAIIPGILGIGEPLIYGVTLP, IGGAAGGFFIGLVSYLGLPVG, and IFAGMAVFVVGLLISYVVGFL.

It is found in the cell inner membrane. It catalyses the reaction N-acetyl-beta-D-muramate(out) + N(pros)-phospho-L-histidyl-[protein] = N-acetyl-beta-D-muramate 6-phosphate(in) + L-histidyl-[protein]. In terms of biological role, the phosphoenolpyruvate-dependent sugar phosphotransferase system (sugar PTS), a major carbohydrate active transport system, catalyzes the phosphorylation of incoming sugar substrates concomitantly with their translocation across the cell membrane. This system is involved in N-acetylmuramic acid (MurNAc) transport, yielding cytoplasmic MurNAc-6-P. Is also able to take up anhydro-N-acetylmuramic acid (anhMurNAc), but cannot phosphorylate the carbon 6, probably because of the 1,6-anhydro ring. This Vibrio vulnificus (strain YJ016) protein is PTS system N-acetylmuramic acid-specific EIIBC component (murP).